The chain runs to 550 residues: Neuronal acetylcholine receptor subunit alpha-9-II (550 aa).

Positions 1–20 are cleaved as a signal peptide; sequence MRKMVPVVCFATMLLQVAHS. The Extracellular portion of the chain corresponds to 21-233; the sequence is AQGRYAQQLL…YTVLLQRRSS (213 aa). Residue N52 is glycosylated (N-linked (GlcNAc...) asparagine). C150 and C164 form a disulfide bridge. An N-linked (GlcNAc...) asparagine glycan is attached at N165. C214 and C215 are oxidised to a cystine. 3 helical membrane-spanning segments follow: residues 234–254, 264–284, and 298–318; these read FYIF…PLGF, VSLG…VAES, and YIAT…IMNI. Residues 319–528 lie on the Cytoplasmic side of the membrane; that stretch reads HFCGAEAKPV…WKRVAKVMDR (210 aa). Residues 357–439 are disordered; the sequence is TSSSSSSSSS…HLSSSKYEGF (83 aa). Over residues 358–367 the composition is skewed to low complexity; it reads SSSSSSSSSS. The segment covering 413–422 has biased composition (basic residues); sequence RHPKPRHQHH. The helical transmembrane segment at 529-549 threads the bilayer; sequence FFMWIFFIMVFLMSILIIGKA.

This sequence belongs to the ligand-gated ion channel (TC 1.A.9) family. Acetylcholine receptor (TC 1.A.9.1) subfamily. As to expression, expressed in the brain, liver, olfactory mucosa, pituitary gland and hair cells of the saccule.

The protein localises to the postsynaptic cell membrane. It localises to the cell membrane. This chain is Neuronal acetylcholine receptor subunit alpha-9-II, found in Oncorhynchus mykiss (Rainbow trout).